Here is a 115-residue protein sequence, read N- to C-terminus: Large ribosomal subunit protein bL19 (115 aa).

The protein belongs to the bacterial ribosomal protein bL19 family.

Its function is as follows. This protein is located at the 30S-50S ribosomal subunit interface and may play a role in the structure and function of the aminoacyl-tRNA binding site. In Klebsiella pneumoniae (strain 342), this protein is Large ribosomal subunit protein bL19.